A 312-amino-acid chain; its full sequence is Tyrosine recombinase XerC (312 aa).

In terms of domain architecture, Core-binding (CB) spans 1 to 103; it reads MISAFYAFLD…AIKSFSQYCI (103 aa). A Tyr recombinase domain is found at 124 to 306; the sequence is ELPSPITYEQ…SMKLKKQTHE (183 aa). Catalysis depends on residues R164, K188, H258, R261, and H284. Y293 acts as the O-(3'-phospho-DNA)-tyrosine intermediate in catalysis.

Belongs to the 'phage' integrase family. XerC subfamily. As to quaternary structure, forms a cyclic heterotetrameric complex composed of two molecules of XerC and two molecules of XerD.

The protein resides in the cytoplasm. Its function is as follows. Site-specific tyrosine recombinase, which acts by catalyzing the cutting and rejoining of the recombining DNA molecules. The XerC-XerD complex is essential to convert dimers of the bacterial chromosome into monomers to permit their segregation at cell division. It also contributes to the segregational stability of plasmids. This chain is Tyrosine recombinase XerC, found in Chlamydia caviae (strain ATCC VR-813 / DSM 19441 / 03DC25 / GPIC) (Chlamydophila caviae).